Consider the following 978-residue polypeptide: Sensor histidine kinase TodS (978 aa).

The 72-residue stretch at 32–103 (CEEHARIIFD…TQKRLVETAS (72 aa)) folds into the PAS 1 domain. A PAC 1 domain is found at 108–162 (VRCDVEILGKSGGREVIAVDFSLLPICNEEGSIVYLLAEGRNITDKKKAEAMLAL). One can recognise a Histidine kinase 1 domain in the interval 187 to 405 (KVSHELRTPL…LFQVKLPLNA (219 aa)). Residue His-190 is modified to Phosphohistidine; by autocatalysis. The 116-residue stretch at 452 to 567 (RVLIVEDNPD…ELRARVSNLV (116 aa)) folds into the Response regulatory domain. Asp-500 is modified (4-aspartylphosphate). One can recognise a PAS 2 domain in the interval 611 to 681 (SEARWKAVYE…QRLANLLQGG (71 aa)). Positions 685 to 737 (YSVERSYLCKNGSTIWANASVSLMPQRVGESPVILQIIDDITEKKQAQENLNQ) constitute a PAC 2 domain. The Histidine kinase 2 domain occupies 757 to 974 (YIAHEINQPL…CFLVSIPARQ (218 aa)). His-760 is subject to Phosphohistidine.

Post-translationally, autophosphorylated. Activation requires a sequential transfer of a phosphate group from a His in the primary transmitter domain, to an Asp in the receiver domain and to a His in the secondary transmitter domain.

It localises to the cytoplasm. It carries out the reaction ATP + protein L-histidine = ADP + protein N-phospho-L-histidine.. Its activity is regulated as follows. Activity is regulated by agonists and antagonists. Binding of agonists such as toluene or benzene to TodS stimulates autophosphorylation at His-190. Activity is inhibited by antagonists such as o-xylene, o-chlorotoluene and trimethylbenzene isomers, which bind to TodS but do not stimulate autophosphorylation. Agonists and antagonists bind to the same PAS domain. Its function is as follows. Member of the two-component regulatory system TodS/TodT involved in the regulation of toluene degradation. Phosphorylates TodT via a four-step phosphorelay in response to toluene. Can also be induced by benzene and ethylbenzene. This Pseudomonas putida (strain DOT-T1E) protein is Sensor histidine kinase TodS (todS).